Consider the following 219-residue polypeptide: Acetylxylan esterase (219 aa).

Serine 15 functions as the Nucleophile in the catalytic mechanism. Residues aspartate 191 and histidine 194 each act as charge relay system in the active site.

The protein belongs to the 'GDSL' lipolytic enzyme family. Homooctamer, presenting a unique donut-shaped quaternary structure built of two staggered tetrameric rings. The eight active sites are organized in four closely situated pairs, which face the relatively wide internal cavity.

Its subcellular location is the cytoplasm. It catalyses the reaction Deacetylation of xylans and xylo-oligosaccharides.. It participates in glycan degradation; xylan degradation. Acetylxylan esterase involved in the degradation of xylan, a major structural heterogeneous polysaccharide found in plant biomass representing the second most abundant polysaccharide in the biosphere, after cellulose. Cleaves acetyl side groups from the xylose backbone units of the hemicellulolytic polymer xylan and xylo-oligosaccharides. Hydrolyzes about 20%-30% of the available acetyl groups on fully acetylated birch wood xylan. Completely deacetylates xylobiose peracetate (fully acetylated), and is active on both the alpha- and beta-forms of the sugar. Also hydrolyzes fully acetylated methyl-beta-D-xylopyranoside and methyl-beta-D-glucopyranoside, and the synthetic substrates 2-naphthyl acetate, 4-nitrophenyl acetate, 4-methylumbelliferyl acetate, and phenyl acetate. The chain is Acetylxylan esterase from Geobacillus stearothermophilus (Bacillus stearothermophilus).